The chain runs to 108 residues: Nucleoid-associated protein Mpe_A2533 (108 aa).

The segment at 86–108 (TSEEKMGKLTAGMPLPPGMKLPF) is disordered. The segment covering 99 to 108 (PLPPGMKLPF) has biased composition (pro residues).

The protein belongs to the YbaB/EbfC family. As to quaternary structure, homodimer.

Its subcellular location is the cytoplasm. The protein localises to the nucleoid. Its function is as follows. Binds to DNA and alters its conformation. May be involved in regulation of gene expression, nucleoid organization and DNA protection. The polypeptide is Nucleoid-associated protein Mpe_A2533 (Methylibium petroleiphilum (strain ATCC BAA-1232 / LMG 22953 / PM1)).